The chain runs to 662 residues: Glutathione hydrolase 7 (662 aa).

The Cytoplasmic segment spans residues 1–106; sequence MAAENEASQE…AAECSCRQDG (106 aa). Phosphoserine occurs at positions 17, 72, 79, and 83. The segment at 26–90 is disordered; it reads SFPRLPEDEP…DGSPLRETRK (65 aa). Low complexity predominate over residues 72 to 83; sequence SSSSEMGSQDGS. A helical; Signal-anchor for type II membrane protein transmembrane segment spans residues 107 to 127; it reads LTVIVTACLTFATGVTVALVM. At 128 to 662 the chain is on the extracellular side; that stretch reads QIYFGDPQIF…SPDAAGATIL (535 aa). N-linked (GlcNAc...) asparagine glycosylation is found at N198, N267, N283, N330, N353, N394, N452, N519, N523, and N586.

This sequence belongs to the gamma-glutamyltransferase family. In terms of assembly, interacts with TLCD3A. As to quaternary structure, heterodimer composed of the light and heavy chains. The active site is located in the light chain. In terms of processing, cleaved by autocatalysis into a large and a small subunit and the autocatalytic cleavage is essential to the functional activation of the enzyme. Widely expressed, but at low level, except in the airway epithelial cells. Detected in brain, heart, kidney, liver, lung, spleen, testis and trachea.

It is found in the membrane. It catalyses the reaction an N-terminal (5-L-glutamyl)-[peptide] + an alpha-amino acid = 5-L-glutamyl amino acid + an N-terminal L-alpha-aminoacyl-[peptide]. The enzyme catalyses glutathione + H2O = L-cysteinylglycine + L-glutamate. It carries out the reaction an S-substituted glutathione + H2O = an S-substituted L-cysteinylglycine + L-glutamate. It participates in sulfur metabolism; glutathione metabolism. Its function is as follows. Hydrolyzes and transfers gamma-glutamyl moieties from glutathione and other gamma-glutamyl compounds to acceptors. In Homo sapiens (Human), this protein is Glutathione hydrolase 7.